A 279-amino-acid chain; its full sequence is MNIENKEITSSWFTNLRDLLCKEFEKIEEEYAQTKGLKPAKFVRSSWQRNGGGGGVMSLMKGAVFEKVGVNISTVFGKISPEFRNEIPGAELDGKFFATGISLVAHLKSPLIPAMHFNTRYIETSKSWFGGGGDLTPFYPEKNETVKFHAAFKEVCDKYDSSYYPKFKKQCDEYFYLKHRKEPRGVGGIFYDYLNNGNFEQDFAFTQDVGKTLLSVYPEIVRSKLFLPWTAEQKEYQLIRRGRYVEFNLLYDRGTKFGLMTDGNVEAILMSLPPEVKFN.

Residue serine 102 participates in substrate binding. A divalent metal cation contacts are provided by histidine 106 and histidine 116. Histidine 116 serves as the catalytic Proton donor. Residue 118–120 participates in substrate binding; sequence NTR. Histidine 149 and histidine 179 together coordinate a divalent metal cation. The interval 244 to 279 is important for dimerization; the sequence is YVEFNLLYDRGTKFGLMTDGNVEAILMSLPPEVKFN.

The protein belongs to the aerobic coproporphyrinogen-III oxidase family. In terms of assembly, homodimer. A divalent metal cation is required as a cofactor.

The protein localises to the cytoplasm. It catalyses the reaction coproporphyrinogen III + O2 + 2 H(+) = protoporphyrinogen IX + 2 CO2 + 2 H2O. It functions in the pathway porphyrin-containing compound metabolism; protoporphyrin-IX biosynthesis; protoporphyrinogen-IX from coproporphyrinogen-III (O2 route): step 1/1. In terms of biological role, involved in the heme biosynthesis. Catalyzes the aerobic oxidative decarboxylation of propionate groups of rings A and B of coproporphyrinogen-III to yield the vinyl groups in protoporphyrinogen-IX. The polypeptide is Oxygen-dependent coproporphyrinogen-III oxidase (Rickettsia rickettsii (strain Iowa)).